The following is a 187-amino-acid chain: MNLQHHFLIAMPALQDPIFRRSVVYICEHNQNGAMGIIVNKPLENLQIEGILEKLKITPESRDSAIRLDKAVMLGGPLAEDRGFILHTPPSRFASSIRISDNTVITTSRDVLETLGTQQQPSDVLVALGYASWDKGQLEQELLDNAWLTAPADLNILFKTPIAERWREAAKLIGIDILTMPGVAGHA.

It belongs to the UPF0301 (AlgH) family.

This is UPF0301 protein YqgE from Salmonella paratyphi A (strain ATCC 9150 / SARB42).